Here is a 1714-residue protein sequence, read N- to C-terminus: Bifunctional glutamate/proline--tRNA ligase (1714 aa).

The disordered stretch occupies residues 166–191; the sequence is DAKVKRSPQSSKEQTPAKTGERKQEG. Residues 170–754 form a glutamate--tRNA ligase region; that stretch reads KRSPQSSKEQ…ASELDSQISQ (585 aa). Positions 172–182 are enriched in polar residues; that stretch reads SPQSSKEQTPA. The short motif at 209–220 is the 'HIGH' region element; that stretch reads PPEASGYLHIGH. The 'KMSKS' region motif lies at 438–442; sequence VLSKR. Disordered regions lie at residues 718-754, 791-817, and 943-962; these read PTSGLKVNAPDAKATKKASSPVSSSGQASELDSQISQ, GKDWKPGQTSASSAPVPAASSSSANDA, and GTTAPAPAAAPVKVKQEKNP. Composition is skewed to low complexity over residues 734–746 and 800–817; these read KASSPVSSSGQAS and SASSAPVPAASSSSANDA. WHEP-TRS domains are found at residues 744–800, 816–872, 890–946, 969–1025, and 1044–1100; these read QASE…GQTS, DAVS…GTVP, SVAQ…GTTA, TVNT…GTVA, and DVGS…DAKS. The segment at 755–1201 is 6 X 57 AA approximate repeats; the sequence is QGDLVRDLKS…KPAKPVKKEP (447 aa). Disordered stretches follow at residues 1093-1119 and 1168-1210; these read DWTPDAKSEPAVVKKEASPVSMASPAK and FPVA…GAVK. Basic and acidic residues predominate over residues 1094-1109; the sequence is WTPDAKSEPAVVKKEA. Serine 1110 carries the post-translational modification Phosphoserine. Residues 1118–1174 enclose the WHEP-TRS 6 domain; the sequence is AKDELTQEINAQGEKVRAAKGNKAAKEVIDAEVAKLLALKAKYKEVTGTDFPVAGRG. Gly residues predominate over residues 1172–1181; it reads GRGGGGGGGS. The proline--tRNA ligase stretch occupies residues 1207–1714; the sequence is GAVKKQTRLG…KFYTLFGRSY (508 aa). Residues 1322 to 1324 and arginine 1353 each bind L-proline; that span reads TSE. ATP is bound by residues arginine 1353, glutamate 1355, arginine 1364, threonine 1365, glutamine 1438, and threonine 1441. Glutamine 1438 lines the Mg(2+) pocket. Histidine 1443 contributes to the L-proline binding site. The ATP site is built by threonine 1476 and arginine 1478. The Zn(2+) site is built by cysteine 1648, cysteine 1653, and cysteine 1695.

It in the N-terminal section; belongs to the class-I aminoacyl-tRNA synthetase family. Glutamate--tRNA ligase type 2 subfamily. The protein in the C-terminal section; belongs to the class-II aminoacyl-tRNA synthetase family. In terms of assembly, component of the multisynthetase complex which is comprised of a bifunctional glutamyl-prolyl-tRNA synthetase, the monospecific isoleucyl, leucyl, glutaminyl, methionyl, lysyl, arginyl, and aspartyl-tRNA synthetases as well as three auxiliary proteins, p18, p48 and p43.

It catalyses the reaction tRNA(Glu) + L-glutamate + ATP = L-glutamyl-tRNA(Glu) + AMP + diphosphate. The enzyme catalyses tRNA(Pro) + L-proline + ATP = L-prolyl-tRNA(Pro) + AMP + diphosphate. Its function is as follows. Catalyzes the attachment of both L-glutamate and L-proline to their cognate tRNAs in a two-step reaction where the amino acid is first activated by ATP to form a covalent intermediate with AMP. Subsequently, the activated amino acid is transferred to the acceptor end of the cognate tRNA to form L-glutamyl-tRNA(Glu) and L-prolyl-tRNA(Pro). The chain is Bifunctional glutamate/proline--tRNA ligase from Drosophila melanogaster (Fruit fly).